Here is a 364-residue protein sequence, read N- to C-terminus: MAQTLINDTFLRALLREPTDYTPIWLMRQAGRYLPEYNATRARAGSFLGLAKHPDYATEVTLQPLERFPLDAAILFSDILTIPDAMGLGLDFAAGEGPKFAHPVRTEADVAKLAVPDIGATLGYVTDAVREIRRALTDGEGRQRVPLIGFSGSPWTLACYMVEGGGSDDFRTVKSMAYARPDLMHRILDVNAQAVAAYLNAQIEAGAQAVMIFDTWGGALADGAYQRFSLDYIRRVVAQLKREHDGARVPAIAFTKGGGLWLEDLAATGVDAVGLDWTVNLGRARERVAGRVALQGNLDPTILFAPPEAIRAEARAVLDSYGNHPGHVFNLGHGISQFTPPEHVAELVDEVHRHSRAIRSGTGS.

Residues 28–32, aspartate 78, tyrosine 160, threonine 215, and histidine 333 each bind substrate; that span reads RQAGR.

The protein belongs to the uroporphyrinogen decarboxylase family. In terms of assembly, homodimer.

The protein resides in the cytoplasm. The catalysed reaction is uroporphyrinogen III + 4 H(+) = coproporphyrinogen III + 4 CO2. It functions in the pathway porphyrin-containing compound metabolism; protoporphyrin-IX biosynthesis; coproporphyrinogen-III from 5-aminolevulinate: step 4/4. In terms of biological role, catalyzes the decarboxylation of four acetate groups of uroporphyrinogen-III to yield coproporphyrinogen-III. The protein is Uroporphyrinogen decarboxylase of Burkholderia thailandensis (strain ATCC 700388 / DSM 13276 / CCUG 48851 / CIP 106301 / E264).